Consider the following 65-residue polypeptide: Putative antitoxin VapB7 (65 aa).

Belongs to the UPF0165 family.

Functionally, possibly the antitoxin component of a type II toxin-antitoxin (TA) system. Its cognate toxin is VapC7 (Potential). In Archaeoglobus fulgidus (strain ATCC 49558 / DSM 4304 / JCM 9628 / NBRC 100126 / VC-16), this protein is Putative antitoxin VapB7 (vapB7).